The following is a 474-amino-acid chain: Protein nucleotidyltransferase YdiU (474 aa).

8 residues coordinate ATP: G89, G91, R92, K112, D124, G125, R175, and R182. D256 functions as the Proton acceptor in the catalytic mechanism. Mg(2+) is bound by residues N257 and D266. An ATP-binding site is contributed by D266.

The protein belongs to the SELO family. Requires Mg(2+) as cofactor. Mn(2+) serves as cofactor.

The enzyme catalyses L-seryl-[protein] + ATP = 3-O-(5'-adenylyl)-L-seryl-[protein] + diphosphate. It carries out the reaction L-threonyl-[protein] + ATP = 3-O-(5'-adenylyl)-L-threonyl-[protein] + diphosphate. The catalysed reaction is L-tyrosyl-[protein] + ATP = O-(5'-adenylyl)-L-tyrosyl-[protein] + diphosphate. It catalyses the reaction L-histidyl-[protein] + UTP = N(tele)-(5'-uridylyl)-L-histidyl-[protein] + diphosphate. The enzyme catalyses L-seryl-[protein] + UTP = O-(5'-uridylyl)-L-seryl-[protein] + diphosphate. It carries out the reaction L-tyrosyl-[protein] + UTP = O-(5'-uridylyl)-L-tyrosyl-[protein] + diphosphate. Its function is as follows. Nucleotidyltransferase involved in the post-translational modification of proteins. It can catalyze the addition of adenosine monophosphate (AMP) or uridine monophosphate (UMP) to a protein, resulting in modifications known as AMPylation and UMPylation. This is Protein nucleotidyltransferase YdiU from Corynebacterium glutamicum (strain R).